The following is a 353-amino-acid chain: Heterogeneous nuclear ribonucleoproteins A2/B1 (353 aa).

Met1 is subject to N-acetylmethionine. Thr4 is modified (phosphothreonine). Residues 9 to 15 (PLERKKR) carry the Nuclear localization signal motif. RRM domains follow at residues 21–104 (RKLF…ESGK) and 112–191 (KKLF…LSRQ). Lys22 is covalently cross-linked (Glycyl lysine isopeptide (Lys-Gly) (interchain with G-Cter in SUMO2)). Ser29 carries the post-translational modification Phosphoserine. An Omega-N-methylarginine modification is found at Arg38. Ser85 bears the Phosphoserine mark. Lys104 carries the N6,N6-dimethyllysine; alternate modification. Lys104 is covalently cross-linked (Glycyl lysine isopeptide (Lys-Gly) (interchain with G-Cter in SUMO2); alternate). Residues Lys112, Lys120, and Lys137 each participate in a glycyl lysine isopeptide (Lys-Gly) (interchain with G-Cter in SUMO2) cross-link. Thr140 is subject to Phosphothreonine. Ser149 is subject to Phosphoserine. Lys152 participates in a covalent cross-link: Glycyl lysine isopeptide (Lys-Gly) (interchain with G-Cter in SUMO2). Thr159 carries the phosphothreonine modification. Glycyl lysine isopeptide (Lys-Gly) (interchain with G-Cter in SUMO2); alternate cross-links involve residues Lys168 and Lys173. An N6-acetyllysine; alternate mark is found at Lys168 and Lys173. Thr176 is modified (phosphothreonine). Lys186 is covalently cross-linked (Glycyl lysine isopeptide (Lys-Gly) (interchain with G-Cter in SUMO2)). 2 positions are modified to phosphoserine: Ser189 and Ser201. Residues 193–353 (MQEVQSSRSG…SGGYGGRSRY (161 aa)) form a disordered region. Gly residues predominate over residues 202-223 (GRGGNFGFGDSRGGGGNFGPGP). Asymmetric dimethylarginine; alternate is present on Arg203. Residue Arg203 is modified to Dimethylated arginine; alternate. Arg203 is modified (omega-N-methylarginine; alternate). A Phosphoserine modification is found at Ser212. At Arg213 the chain carries Asymmetric dimethylarginine; alternate. Residue Arg213 is modified to Dimethylated arginine; alternate. Position 213 is an omega-N-methylarginine; alternate (Arg213). Ser225 carries the post-translational modification Phosphoserine. Omega-N-methylarginine is present on Arg228. A phosphoserine mark is found at Ser231 and Ser236. Position 238 is an omega-N-methylarginine (Arg238). Ser259 is subject to Phosphoserine. Arg266 is subject to Asymmetric dimethylarginine; alternate. Arg266 carries the post-translational modification Omega-N-methylarginine; alternate. Residues 308–347 (QQPSNYGPMKSGNFGGSRNMGGPYGGGNYGPGGSGGSGGY) are nuclear targeting sequence. Over residues 320–353 (NFGGSRNMGGPYGGGNYGPGGSGGSGGYGGRSRY) the composition is skewed to gly residues. Ser324 is subject to Phosphoserine. Residue Arg325 is modified to Omega-N-methylarginine. Phosphotyrosine is present on Tyr331. A phosphoserine mark is found at Ser341 and Ser344. Residue Tyr347 is modified to Phosphotyrosine. Position 350 is an omega-N-methylarginine (Arg350).

As to quaternary structure, homodimer; dimerization is required for nucleocytoplasmic translocation. Identified in the spliceosome C complex. Identified in a IGF2BP1-dependent mRNP granule complex containing untranslated mRNAs. Interacts with IGF2BP1. Interacts with C9orf72. Interacts with DGCR8. Interacts with TARDBP. Interacts with CKAP5. Interacts with TBK1. Interacts with STING1. Interacts with SRC. Interacts with PPIA/CYPA. Interacts (via C-terminus) with FAM76B; the interaction results in retention of HNRNPA2B1 in the nucleus and inhibition of the NF-kappa-B-mediated inflammatory pathway. Interacts with NF-kappa-B inhibitors NFKBIA and NFKBIE; the interaction may be mediated by the RRM2 domain of HNRNPA2B1, and HNRNPA2B1 may interact simultaneously with FAM76B and either NFKBIA or NFKBIE to form a complex. Asymmetric dimethylation at Arg-266 constitutes the major methylation site. According to a report, methylation affects subcellular location and promotes nuclear localization. According to another report, methylation at Arg-266 does not influence nucleocytoplasmic shuttling. In terms of processing, sumoylated in exosomes, promoting miRNAs-binding. In the brain, isoform A2 and isoform B1 are abundant in large ganglion-type neurons, such as Purkinje cells, and are less abundant in neighboring glia cells. Isoform A2 is more abundant than isoform B1 in brain. In testis, isoform A2 and isoform B1 are present in spermatogonia and spermatocytes, but not in spermatids or sperm. Isoform A2 is more abundant in the adrenal medulla than in the cortical cells. Isoform B1 is found in both adrenal medulla and cortical cells. Isoform A2 is more abundant than isoform B1 in the adrenal gland. Isoform A2 and isoform B1 are both detected in pancreas and kidney, and at lower levels in heart and lung. Isoform B1 is more abundant than isoform A2 in heart, lung and intestine (at protein level). Isoform A2b and isoform B1b are testis-specific.

It localises to the nucleus. Its subcellular location is the cytoplasm. It is found in the nucleoplasm. The protein localises to the cytoplasmic granule. The protein resides in the secreted. It localises to the extracellular exosome. In terms of biological role, heterogeneous nuclear ribonucleoprotein (hnRNP) that associates with nascent pre-mRNAs, packaging them into hnRNP particles. The hnRNP particle arrangement on nascent hnRNA is non-random and sequence-dependent and serves to condense and stabilize the transcripts and minimize tangling and knotting. Packaging plays a role in various processes such as transcription, pre-mRNA processing, RNA nuclear export, subcellular location, mRNA translation and stability of mature mRNAs. Forms hnRNP particles with at least 20 other different hnRNP and heterogeneous nuclear RNA in the nucleus. Involved in transport of specific mRNAs to the cytoplasm in oligodendrocytes and neurons: acts by specifically recognizing and binding the A2RE (21 nucleotide hnRNP A2 response element) or the A2RE11 (derivative 11 nucleotide oligonucleotide) sequence motifs present on some mRNAs, and promotes their transport to the cytoplasm. Specifically binds single-stranded telomeric DNA sequences, protecting telomeric DNA repeat against endonuclease digestion. Also binds other RNA molecules, such as primary miRNA (pri-miRNAs): acts as a nuclear 'reader' of the N6-methyladenosine (m6A) mark by specifically recognizing and binding a subset of nuclear m6A-containing pri-miRNAs. Binding to m6A-containing pri-miRNAs promotes pri-miRNA processing by enhancing binding of DGCR8 to pri-miRNA transcripts. Involved in miRNA sorting into exosomes following sumoylation, possibly by binding (m6A)-containing pre-miRNAs. Acts as a regulator of efficiency of mRNA splicing, possibly by binding to m6A-containing pre-mRNAs. Plays a role in the splicing of pyruvate kinase PKM by binding repressively to sequences flanking PKM exon 9, inhibiting exon 9 inclusion and resulting in exon 10 inclusion and production of the PKM M2 isoform. Also plays a role in the activation of the innate immune response. Mechanistically, senses the presence of viral DNA in the nucleus, homodimerizes and is demethylated by JMJD6. In turn, translocates to the cytoplasm where it activates the TBK1-IRF3 pathway, leading to interferon alpha/beta production. The polypeptide is Heterogeneous nuclear ribonucleoproteins A2/B1 (Rattus norvegicus (Rat)).